Consider the following 178-residue polypeptide: Large ribosomal subunit protein uL6 (178 aa).

The protein belongs to the universal ribosomal protein uL6 family. In terms of assembly, part of the 50S ribosomal subunit.

In terms of biological role, this protein binds to the 23S rRNA, and is important in its secondary structure. It is located near the subunit interface in the base of the L7/L12 stalk, and near the tRNA binding site of the peptidyltransferase center. The polypeptide is Large ribosomal subunit protein uL6 (Corynebacterium aurimucosum (strain ATCC 700975 / DSM 44827 / CIP 107346 / CN-1) (Corynebacterium nigricans)).